The sequence spans 211 residues: Uracil phosphoribosyltransferase (211 aa).

Residues R78, R103, and 130–138 contribute to the 5-phospho-alpha-D-ribose 1-diphosphate site; that span reads DPMLATGGS. Residues I193 and 198-200 contribute to the uracil site; that span reads GDA. D199 lines the 5-phospho-alpha-D-ribose 1-diphosphate pocket.

Belongs to the UPRTase family. Mg(2+) is required as a cofactor.

It carries out the reaction UMP + diphosphate = 5-phospho-alpha-D-ribose 1-diphosphate + uracil. Its pathway is pyrimidine metabolism; UMP biosynthesis via salvage pathway; UMP from uracil: step 1/1. Allosterically activated by GTP. Functionally, catalyzes the conversion of uracil and 5-phospho-alpha-D-ribose 1-diphosphate (PRPP) to UMP and diphosphate. The polypeptide is Uracil phosphoribosyltransferase (Hahella chejuensis (strain KCTC 2396)).